The chain runs to 174 residues: Translation initiation factor IF-3 (174 aa).

It belongs to the IF-3 family. Monomer.

The protein localises to the cytoplasm. Its function is as follows. IF-3 binds to the 30S ribosomal subunit and shifts the equilibrium between 70S ribosomes and their 50S and 30S subunits in favor of the free subunits, thus enhancing the availability of 30S subunits on which protein synthesis initiation begins. This Xanthobacter autotrophicus (strain ATCC BAA-1158 / Py2) protein is Translation initiation factor IF-3.